The primary structure comprises 108 residues: MALPAGYSRNWSGPWPKTPGRVLGTAFVRLYQLTLSGFIGNSCRHFPTCSEYAYEAIARHGLWAGGWMGLFRVMHCGPGGTHGIDPVPEILQPRHAWWAPWRLWKLKP.

This sequence belongs to the UPF0161 family.

It localises to the cell inner membrane. Its function is as follows. Could be involved in insertion of integral membrane proteins into the membrane. This Chelativorans sp. (strain BNC1) protein is Putative membrane protein insertion efficiency factor.